A 189-amino-acid polypeptide reads, in one-letter code: GTP cyclohydrolase 1 (189 aa).

Positions 79, 82, and 151 each coordinate Zn(2+).

This sequence belongs to the GTP cyclohydrolase I family. In terms of assembly, toroid-shaped homodecamer, composed of two pentamers of five dimers.

The enzyme catalyses GTP + H2O = 7,8-dihydroneopterin 3'-triphosphate + formate + H(+). The protein operates within cofactor biosynthesis; 7,8-dihydroneopterin triphosphate biosynthesis; 7,8-dihydroneopterin triphosphate from GTP: step 1/1. The sequence is that of GTP cyclohydrolase 1 from Lactiplantibacillus plantarum (strain ATCC BAA-793 / NCIMB 8826 / WCFS1) (Lactobacillus plantarum).